Here is a 320-residue protein sequence, read N- to C-terminus: Melanocyte-stimulating hormone receptor (320 aa).

Residues 1–40 lie on the Extracellular side of the membrane; the sequence is MPVLGPERRLLASLSSAPPAAPRLGLAANQTNQTGPQCLE. Residue Asn32 is glycosylated (N-linked (GlcNAc...) asparagine). The chain crosses the membrane as a helical span at residues 41 to 66; the sequence is VSIPDGLFLSLGLVSLVENVLVVAAI. The Cytoplasmic segment spans residues 67–75; it reads AKNRNLHSP. The chain crosses the membrane as a helical span at residues 76–96; it reads MYYFVCCLAVSDLLVSVSNVL. Topologically, residues 97-121 are extracellular; the sequence is ETAVLLLLEAGALAAQAAVVQQLDN. Residues 122-143 traverse the membrane as a helical segment; sequence VMDVLICGSMVSSLCFLGAIAV. Residues 144–166 are Cytoplasmic-facing; the sequence is DRYVSIFYALRYHSIVTLPRAGR. A helical membrane pass occupies residues 167-186; that stretch reads AIAAIWAGSVLSSTLFIAYY. The Extracellular segment spans residues 187-194; that stretch reads HHTAVLLG. Residues 195–214 traverse the membrane as a helical segment; it reads LVSFFVAMLALMAVLYVHML. Over 215–243 the chain is Cytoplasmic; that stretch reads ARACQHGRHIARLHKTQHPTRQGCGLKGA. The chain crosses the membrane as a helical span at residues 244–269; that stretch reads ATLTILLGVFLLCWAPFFLHLSLVVL. The Extracellular portion of the chain corresponds to 270-282; the sequence is CPQHPTCGCVFKN. A helical membrane pass occupies residues 283–303; that stretch reads VNLFLALVICNSIVDPLIYAF. Topologically, residues 304 to 320 are cytoplasmic; that stretch reads RSQELRKTLQEVLQCSW.

It belongs to the G-protein coupled receptor 1 family. As to quaternary structure, interacts with MGRN1, but does not undergo MGRN1-mediated ubiquitination; this interaction competes with GNAS-binding and thus inhibits agonist-induced cAMP production. Interacts with OPN3; the interaction results in a decrease in MC1R-mediated cAMP signaling and ultimately a decrease in melanin production in melanocytes.

It localises to the cell membrane. Its function is as follows. Receptor for MSH (alpha, beta and gamma) and ACTH. The activity of this receptor is mediated by G proteins which activate adenylate cyclase. Mediates melanogenesis, the production of eumelanin (black/brown) and phaeomelanin (red/yellow), via regulation of cAMP signaling in melanocytes. The chain is Melanocyte-stimulating hormone receptor (MC1R) from Sus scrofa (Pig).